The chain runs to 77 residues: DNA-directed RNA polymerase subunit omega (77 aa).

The protein belongs to the RNA polymerase subunit omega family. The RNAP catalytic core consists of 2 alpha, 1 beta, 1 beta' and 1 omega subunit. When a sigma factor is associated with the core the holoenzyme is formed, which can initiate transcription.

The enzyme catalyses RNA(n) + a ribonucleoside 5'-triphosphate = RNA(n+1) + diphosphate. Functionally, promotes RNA polymerase assembly. Latches the N- and C-terminal regions of the beta' subunit thereby facilitating its interaction with the beta and alpha subunits. The polypeptide is DNA-directed RNA polymerase subunit omega (Nitratidesulfovibrio vulgaris (strain ATCC 29579 / DSM 644 / CCUG 34227 / NCIMB 8303 / VKM B-1760 / Hildenborough) (Desulfovibrio vulgaris)).